The sequence spans 933 residues: Dual 3',5'-cyclic-AMP and -GMP phosphodiesterase 11A (933 aa).

The tract at residues 42–125 (HSQGQGALGP…ASQKELRKSF (84 aa)) is disordered. Phosphoserine occurs at positions 162, 163, and 239. GAF domains are found at residues 217–370 (DLTS…GIAI) and 402–558 (DLEK…GLGI). Serine 424 lines the 3',5'-cyclic GMP pocket. The region spanning 588–912 (SKAEVDKFKA…SKWEELHQKR (325 aa)) is the PDEase domain. Histidine 664 functions as the Proton donor in the catalytic mechanism. Residues histidine 668, histidine 704, aspartate 705, and aspartate 816 each contribute to the a divalent metal cation site.

This sequence belongs to the cyclic nucleotide phosphodiesterase family. A divalent metal cation is required as a cofactor. Isoform 1 is present in prostate, pituitary, heart and liver. It is however not present in testis nor in penis, suggesting that weak inhibition by Tadalafil (Cialis) is not relevant (at protein level). Isoform 2 may be expressed in testis. Isoform 4 is expressed in adrenal cortex.

The protein localises to the cytoplasm. Its subcellular location is the cytosol. It catalyses the reaction 3',5'-cyclic GMP + H2O = GMP + H(+). It carries out the reaction 3',5'-cyclic AMP + H2O = AMP + H(+). Its activity is regulated as follows. Inhibited by 3-isobutyl-1-methylxanthine (IBMX), zaprinast and dipyridamole. cGMP acts as an allosteric activator. Weakly inhibited by Sildenafil (Viagra) and Tadalafil (Cialis); however, the fact that the protein is probably absent from testis, suggests that it is not biologically relevant and is not related with erectile dysfunction. Its function is as follows. Plays a role in signal transduction by regulating the intracellular concentration of cyclic nucleotides cAMP and cGMP. Catalyzes the hydrolysis of both cAMP and cGMP to 5'-AMP and 5'-GMP, respectively. The chain is Dual 3',5'-cyclic-AMP and -GMP phosphodiesterase 11A from Homo sapiens (Human).